The following is a 333-amino-acid chain: Glycerol-3-phosphate dehydrogenase [NAD(P)+] (333 aa).

Ser-10, Trp-11, and Lys-105 together coordinate NADPH. The sn-glycerol 3-phosphate site is built by Lys-105, Gly-136, and Thr-138. NADPH is bound at residue Ala-140. Sn-glycerol 3-phosphate-binding residues include Lys-191, Asp-244, Ser-254, Arg-255, and Asn-256. Residue Lys-191 is the Proton acceptor of the active site. NADPH is bound at residue Arg-255. 2 residues coordinate NADPH: Val-279 and Glu-281.

This sequence belongs to the NAD-dependent glycerol-3-phosphate dehydrogenase family.

It localises to the cytoplasm. The enzyme catalyses sn-glycerol 3-phosphate + NAD(+) = dihydroxyacetone phosphate + NADH + H(+). The catalysed reaction is sn-glycerol 3-phosphate + NADP(+) = dihydroxyacetone phosphate + NADPH + H(+). Its pathway is membrane lipid metabolism; glycerophospholipid metabolism. Its function is as follows. Catalyzes the reduction of the glycolytic intermediate dihydroxyacetone phosphate (DHAP) to sn-glycerol 3-phosphate (G3P), the key precursor for phospholipid synthesis. The protein is Glycerol-3-phosphate dehydrogenase [NAD(P)+] of Syntrophotalea carbinolica (strain DSM 2380 / NBRC 103641 / GraBd1) (Pelobacter carbinolicus).